A 334-amino-acid polypeptide reads, in one-letter code: Aspartate carbamoyltransferase catalytic subunit (334 aa).

Residues Arg71 and Thr72 each coordinate carbamoyl phosphate. An L-aspartate-binding site is contributed by Lys99. Residues Arg121, His151, and Gln154 each coordinate carbamoyl phosphate. Positions 184 and 239 each coordinate L-aspartate. Carbamoyl phosphate contacts are provided by Gly280 and Pro281.

It belongs to the aspartate/ornithine carbamoyltransferase superfamily. ATCase family. Heterododecamer (2C3:3R2) of six catalytic PyrB chains organized as two trimers (C3), and six regulatory PyrI chains organized as three dimers (R2).

The catalysed reaction is carbamoyl phosphate + L-aspartate = N-carbamoyl-L-aspartate + phosphate + H(+). The protein operates within pyrimidine metabolism; UMP biosynthesis via de novo pathway; (S)-dihydroorotate from bicarbonate: step 2/3. Its function is as follows. Catalyzes the condensation of carbamoyl phosphate and aspartate to form carbamoyl aspartate and inorganic phosphate, the committed step in the de novo pyrimidine nucleotide biosynthesis pathway. The protein is Aspartate carbamoyltransferase catalytic subunit of Pseudomonas fluorescens (strain Pf0-1).